Consider the following 114-residue polypeptide: MASSRRGLLLLLMLLTAHPGPSEAQHWSHGWYPGGKRALSSAQDPQNALRPPAGSPAQATYGLPSDALAHLEDSMPWEGRTMAWWSLRRKRYLAQTLLTAAREPRPVPPSSNKV.

The first 24 residues, 1–24 (MASSRRGLLLLLMLLTAHPGPSEA), serve as a signal peptide directing secretion. Gly34 is subject to Glycine amide. A disordered region spans residues 35 to 59 (GKRALSSAQDPQNALRPPAGSPAQA).

This sequence belongs to the GnRH family.

The protein resides in the secreted. In terms of biological role, stimulates the secretion of gonadotropins; it stimulates the secretion of both luteinizing and follicle-stimulating hormones. The polypeptide is Progonadoliberin-2 (GNRH2) (Macaca mulatta (Rhesus macaque)).